A 104-amino-acid polypeptide reads, in one-letter code: MTLEKIKKYLISKINIKFIEIYDDSQFHHYSKKGLTHLRIIIISDDFINQTLINRHRIIFSMLSKMIEKKIYSLTLNTYTLNEWKDKKLKKTSNVKCVKKNNIL.

This sequence belongs to the BolA/IbaG family.

This is an uncharacterized protein from Buchnera aphidicola subsp. Acyrthosiphon pisum (strain APS) (Acyrthosiphon pisum symbiotic bacterium).